The following is a 562-amino-acid chain: Phosphomethylpyrimidine synthase (562 aa).

Residues Asn179, Met208, Tyr237, His273, 293–295 (SRG), 334–337 (DGLR), and Glu373 each bind substrate. His377 contacts Zn(2+). Residue Tyr400 coordinates substrate. His441 lines the Zn(2+) pocket. Positions 521, 524, and 529 each coordinate [4Fe-4S] cluster.

Belongs to the ThiC family. Requires [4Fe-4S] cluster as cofactor.

The catalysed reaction is 5-amino-1-(5-phospho-beta-D-ribosyl)imidazole + S-adenosyl-L-methionine = 4-amino-2-methyl-5-(phosphooxymethyl)pyrimidine + CO + 5'-deoxyadenosine + formate + L-methionine + 3 H(+). Its pathway is cofactor biosynthesis; thiamine diphosphate biosynthesis. Catalyzes the synthesis of the hydroxymethylpyrimidine phosphate (HMP-P) moiety of thiamine from aminoimidazole ribotide (AIR) in a radical S-adenosyl-L-methionine (SAM)-dependent reaction. The chain is Phosphomethylpyrimidine synthase from Geobacillus kaustophilus (strain HTA426).